The chain runs to 192 residues: Crossover junction endodeoxyribonuclease RuvC (192 aa).

Active-site residues include D7, E67, and D140. 3 residues coordinate Mg(2+): D7, E67, and D140. Residues 158–192 (RQSGVPPRTNSRRKSGTGGSWEQFVRQSPNVVVRS) form a disordered region. Over residues 182-192 (VRQSPNVVVRS) the composition is skewed to polar residues.

The protein belongs to the RuvC family. In terms of assembly, homodimer which binds Holliday junction (HJ) DNA. The HJ becomes 2-fold symmetrical on binding to RuvC with unstacked arms; it has a different conformation from HJ DNA in complex with RuvA. In the full resolvosome a probable DNA-RuvA(4)-RuvB(12)-RuvC(2) complex forms which resolves the HJ. Mg(2+) serves as cofactor.

The protein localises to the cytoplasm. The catalysed reaction is Endonucleolytic cleavage at a junction such as a reciprocal single-stranded crossover between two homologous DNA duplexes (Holliday junction).. The RuvA-RuvB-RuvC complex processes Holliday junction (HJ) DNA during genetic recombination and DNA repair. Endonuclease that resolves HJ intermediates. Cleaves cruciform DNA by making single-stranded nicks across the HJ at symmetrical positions within the homologous arms, yielding a 5'-phosphate and a 3'-hydroxyl group; requires a central core of homology in the junction. The consensus cleavage sequence is 5'-(A/T)TT(C/G)-3'. Cleavage occurs on the 3'-side of the TT dinucleotide at the point of strand exchange. HJ branch migration catalyzed by RuvA-RuvB allows RuvC to scan DNA until it finds its consensus sequence, where it cleaves and resolves the cruciform DNA. This Chlorobium chlorochromatii (strain CaD3) protein is Crossover junction endodeoxyribonuclease RuvC.